The following is a 444-amino-acid chain: Porin AaxA (444 aa).

Positions 1 to 19 are cleaved as a signal peptide; sequence MAFSRFYLLTALYTGGILA. The segment at 42-68 is disordered; sequence KNSTQDSDSSPSESSPHPRQEPRRHVL. A compositionally biased stretch (low complexity) spans 46 to 56; sequence QDSDSSPSESS.

It belongs to the OprB family.

It is found in the cell outer membrane. In terms of biological role, facilitates L-arginine uptake, as part of the AaxABC system. The arginine uptake by the bacterium in the macrophage may be a virulence factor against the host innate immune response. This Chlamydia felis (strain Fe/C-56) (Chlamydophila felis) protein is Porin AaxA (aaxA).